We begin with the raw amino-acid sequence, 571 residues long: Phosphoenolpyruvate-protein phosphotransferase (571 aa).

Catalysis depends on H189, which acts as the Tele-phosphohistidine intermediate. Residues R296 and R332 each contribute to the phosphoenolpyruvate site. Residues E431 and D455 each contribute to the Mg(2+) site. Phosphoenolpyruvate is bound by residues 454 to 455 and R465; that span reads ND. C502 acts as the Proton donor in catalysis.

The protein belongs to the PEP-utilizing enzyme family. In terms of assembly, homodimer. Mg(2+) serves as cofactor.

It localises to the cytoplasm. It catalyses the reaction L-histidyl-[protein] + phosphoenolpyruvate = N(pros)-phospho-L-histidyl-[protein] + pyruvate. Functionally, general (non sugar-specific) component of the phosphoenolpyruvate-dependent sugar phosphotransferase system (sugar PTS). This major carbohydrate active-transport system catalyzes the phosphorylation of incoming sugar substrates concomitantly with their translocation across the cell membrane. Enzyme I transfers the phosphoryl group from phosphoenolpyruvate (PEP) to the phosphoryl carrier protein (HPr). In Buchnera aphidicola subsp. Acyrthosiphon pisum (strain APS) (Acyrthosiphon pisum symbiotic bacterium), this protein is Phosphoenolpyruvate-protein phosphotransferase (ptsI).